A 156-amino-acid polypeptide reads, in one-letter code: Ribosomal RNA large subunit methyltransferase H (156 aa).

S-adenosyl-L-methionine-binding positions include L72, G104, and L123 to W128.

It belongs to the RNA methyltransferase RlmH family. As to quaternary structure, homodimer.

It is found in the cytoplasm. The catalysed reaction is pseudouridine(1915) in 23S rRNA + S-adenosyl-L-methionine = N(3)-methylpseudouridine(1915) in 23S rRNA + S-adenosyl-L-homocysteine + H(+). In terms of biological role, specifically methylates the pseudouridine at position 1915 (m3Psi1915) in 23S rRNA. The protein is Ribosomal RNA large subunit methyltransferase H of Roseobacter denitrificans (strain ATCC 33942 / OCh 114) (Erythrobacter sp. (strain OCh 114)).